A 408-amino-acid chain; its full sequence is Imidazolonepropionase (408 aa).

Positions 72 and 74 each coordinate Fe(3+). Positions 72 and 74 each coordinate Zn(2+). Residues Arg81, Tyr144, and His177 each contribute to the 4-imidazolone-5-propanoate site. Residue Tyr144 coordinates N-formimidoyl-L-glutamate. A Fe(3+)-binding site is contributed by His242. Position 242 (His242) interacts with Zn(2+). 4-imidazolone-5-propanoate is bound at residue Gln245. A Fe(3+)-binding site is contributed by Asp317. Residue Asp317 participates in Zn(2+) binding. Residues Asn319 and Gly321 each coordinate N-formimidoyl-L-glutamate. Residue Thr322 participates in 4-imidazolone-5-propanoate binding.

Belongs to the metallo-dependent hydrolases superfamily. HutI family. The cofactor is Zn(2+). Fe(3+) serves as cofactor.

The protein resides in the cytoplasm. It catalyses the reaction 4-imidazolone-5-propanoate + H2O = N-formimidoyl-L-glutamate. It participates in amino-acid degradation; L-histidine degradation into L-glutamate; N-formimidoyl-L-glutamate from L-histidine: step 3/3. In terms of biological role, catalyzes the hydrolytic cleavage of the carbon-nitrogen bond in imidazolone-5-propanoate to yield N-formimidoyl-L-glutamate. It is the third step in the universal histidine degradation pathway. This is Imidazolonepropionase from Aliivibrio fischeri (strain MJ11) (Vibrio fischeri).